Consider the following 365-residue polypeptide: MIRAFDALSLPVLRWLDPEDAHRLAIQGLRFLPPVKPRADDPKLAVRAFGLNFPNPIGMAAGFDKSAEVPDALLRLGFGFVEIGSVTPKPQSGNPRPRLFRLERDEAVINRMGFNNDGADVALRRLAARAQHGGIVGVNVGANKDSPDRVGDYVKLIEAFAPVASYFTINVSSPNTPGLRNLQEGALLDDLLARVIDARERVRQKAGDTPVLLKIAPDLSLAQLDDVVQVARSRRVDGMIVSNTTIARPSTLREEMRAKEQGGLSGRPLFRLSTRMVAETYVRVEGAFPLVGVGGVDSGGAALTKIRAGASLIQLYSSLVYKGLGLVEEIKRDLTSTLLRTGRDSLSDIVGADAATLTAEDWPGM.

FMN-binding positions include 61 to 65 and Ser85; that span reads AGFDK. Residue Lys65 participates in substrate binding. 110 to 114 provides a ligand contact to substrate; sequence NRMGF. Positions 139 and 170 each coordinate FMN. Position 170 (Asn170) interacts with substrate. Ser173 functions as the Nucleophile in the catalytic mechanism. Asn175 contributes to the substrate binding site. Lys214 and Ser242 together coordinate FMN. 243–244 contributes to the substrate binding site; it reads NT. Residues Gly266, Gly295, and 316-317 each bind FMN; that span reads YS.

This sequence belongs to the dihydroorotate dehydrogenase family. Type 2 subfamily. Monomer. FMN serves as cofactor.

It localises to the cell membrane. The catalysed reaction is (S)-dihydroorotate + a quinone = orotate + a quinol. Its pathway is pyrimidine metabolism; UMP biosynthesis via de novo pathway; orotate from (S)-dihydroorotate (quinone route): step 1/1. Catalyzes the conversion of dihydroorotate to orotate with quinone as electron acceptor. In Bradyrhizobium diazoefficiens (strain JCM 10833 / BCRC 13528 / IAM 13628 / NBRC 14792 / USDA 110), this protein is Dihydroorotate dehydrogenase (quinone).